The chain runs to 635 residues: Threonine--tRNA ligase (635 aa).

The TGS domain maps to 1–61 (MVSIRLPDGS…DHDASLAIVT (61 aa)). The tract at residues 242-533 (DHRKLGKQLD…LIEHHAGAMP (292 aa)) is catalytic. Zn(2+) contacts are provided by cysteine 333, histidine 384, and histidine 510.

It belongs to the class-II aminoacyl-tRNA synthetase family. Homodimer. Zn(2+) is required as a cofactor.

It is found in the cytoplasm. It carries out the reaction tRNA(Thr) + L-threonine + ATP = L-threonyl-tRNA(Thr) + AMP + diphosphate + H(+). Its function is as follows. Catalyzes the attachment of threonine to tRNA(Thr) in a two-step reaction: L-threonine is first activated by ATP to form Thr-AMP and then transferred to the acceptor end of tRNA(Thr). Also edits incorrectly charged L-seryl-tRNA(Thr). In Burkholderia multivorans (strain ATCC 17616 / 249), this protein is Threonine--tRNA ligase.